We begin with the raw amino-acid sequence, 717 residues long: Fatty acid oxidation complex subunit alpha (717 aa).

Residues 1-189 (MIYQSPTIEV…NVGAIDALVA (189 aa)) form an enoyl-CoA hydratase/isomerase region. D296 serves as a coordination point for substrate. Residues 311-717 (KKVNSAAVLG…ANNGSYYQQA (407 aa)) form a 3-hydroxyacyl-CoA dehydrogenase region. Residues M324, D343, 400 to 402 (VVE), K407, and S429 each bind NAD(+). The active-site For 3-hydroxyacyl-CoA dehydrogenase activity is H450. Residue N453 coordinates NAD(+). Substrate contacts are provided by N500 and Y660.

In the N-terminal section; belongs to the enoyl-CoA hydratase/isomerase family. The protein in the C-terminal section; belongs to the 3-hydroxyacyl-CoA dehydrogenase family. Heterotetramer of two alpha chains (FadB) and two beta chains (FadA).

It carries out the reaction a (3S)-3-hydroxyacyl-CoA + NAD(+) = a 3-oxoacyl-CoA + NADH + H(+). The enzyme catalyses a (3S)-3-hydroxyacyl-CoA = a (2E)-enoyl-CoA + H2O. It catalyses the reaction a 4-saturated-(3S)-3-hydroxyacyl-CoA = a (3E)-enoyl-CoA + H2O. The catalysed reaction is (3S)-3-hydroxybutanoyl-CoA = (3R)-3-hydroxybutanoyl-CoA. It carries out the reaction a (3Z)-enoyl-CoA = a 4-saturated (2E)-enoyl-CoA. The enzyme catalyses a (3E)-enoyl-CoA = a 4-saturated (2E)-enoyl-CoA. It participates in lipid metabolism; fatty acid beta-oxidation. Functionally, involved in the aerobic and anaerobic degradation of long-chain fatty acids via beta-oxidation cycle. Catalyzes the formation of 3-oxoacyl-CoA from enoyl-CoA via L-3-hydroxyacyl-CoA. It can also use D-3-hydroxyacyl-CoA and cis-3-enoyl-CoA as substrate. This chain is Fatty acid oxidation complex subunit alpha, found in Shewanella piezotolerans (strain WP3 / JCM 13877).